Consider the following 433-residue polypeptide: FAD-dependent monooxygenase notI' (433 aa).

2 residues coordinate FAD: glutamate 45 and arginine 117. Arginine 195 is an active-site residue. Aspartate 314 and alanine 327 together coordinate FAD.

The protein belongs to the paxM FAD-dependent monooxygenase family. Requires FAD as cofactor.

It participates in alkaloid biosynthesis. Functionally, FAD-dependent monooxygenase; part of the gene cluster that mediates the biosynthesis of notoamide, a fungal indole alkaloid that belongs to a family of natural products containing a characteristic bicyclo[2.2.2]diazaoctane core. The first step of notoamide biosynthesis involves coupling of L-proline and L-tryptophan by the bimodular NRPS notE', to produce cyclo-L-tryptophan-L-proline called brevianamide F. The reverse prenyltransferase notF' then acts as a deoxybrevianamide E synthase and converts brevianamide F to deoxybrevianamide E via reverse prenylation at C-2 of the indole ring leading to the bicyclo[2.2.2]diazaoctane core. Deoxybrevianamide E is further hydroxylated at C-6 of the indole ring, likely catalyzed by the cytochrome P450 monooxygenase notG', to yield 6-hydroxy-deoxybrevianamide E. 6-hydroxy-deoxybrevianamide E is a specific substrate of the prenyltransferase notC' for normal prenylation at C-7 to produce 6-hydroxy-7-prenyl-deoxybrevianamide, also called notoamide S. As the proposed pivotal branching point in notoamide biosynthesis, notoamide S can be diverted to notoamide E through an oxidative pyran ring closure putatively catalyzed by either notH' cytochrome P450 monooxygenase or the notD' FAD-linked oxidoreductase. This step would be followed by an indole 2,3-epoxidation-initiated pinacol-like rearrangement catalyzed by the notB' FAD-dependent monooxygenase leading to the formation of notoamide C and notoamide D. On the other hand notoamide S is converted to notoamide T by notH' (or notD'), a bifunctional oxidase that also functions as the intramolecular Diels-Alderase responsible for generation of (-)-notoamide T. To generate antipodal (+)-notoaminide T, notH (or notD) in Aspergillus strain MF297-2 is expected to catalyze a Diels-Alder reaction leading to the opposite stereochemistry. The remaining oxidoreductase notD' (or notH') likely catalyzes the oxidative pyran ring formation to yield (-)-stephacidin A. The FAD-dependent monooxygenase notI' is highly similar to notB' and is predicted to catalyze a similar conversion from (-)-stephacidin A to (+)-notoamide B via the 2,3-epoxidation of (-)-stephacidin A followed by a pinacol-type rearrangement. Finally, it remains unclear which enzyme could be responsible for the final hydroxylation steps leading to notoamide A and sclerotiamide. The protein is FAD-dependent monooxygenase notI' of Aspergillus versicolor.